The chain runs to 1249 residues: Nuclear envelope pore membrane protein POM 121 (1249 aa).

Residues 1-10 (MSPAAAAAGA) are compositionally biased toward low complexity. The segment at 1 to 27 (MSPAAAAAGAGERRRPIASVRDGRGRG) is disordered. A cisternal side region spans residues 1–34 (MSPAAAAAGAGERRRPIASVRDGRGRGCGGPARA). A required for targeting to the nucleus and nuclear pore complex region spans residues 1–285 (MSPAAAAAGA…APPDRRFSRS (285 aa)). The segment covering 11–25 (GERRRPIASVRDGRG) has biased composition (basic and acidic residues). The chain crosses the membrane as a helical span at residues 35 to 55 (VLLGLSLVGLLLYLVPAAAAL). The pore side stretch occupies residues 56-1249 (AWLTVGATAA…QARRQHTRKK (1194 aa)). Residue Ser94 is modified to Phosphoserine. 5 disordered regions span residues 136–220 (LMGS…CGTL), 319–530 (KEKK…LGYS), 602–776 (KKMQ…PVFS), 959–986 (PLPS…AKPA), and 1226–1249 (IGAG…TRKK). A compositionally biased stretch (pro residues) spans 168–190 (ARPAPRSPPPRSPPPRSPPPSPP). Residues Ser345, Ser351, Ser371, Ser393, and Ser396 each carry the phosphoserine modification. Residues 405-423 (IPSSSRNAITSSYSSTRGI) show a composition bias toward polar residues. The segment covering 432–445 (PSSSPFSSPASSRS) has biased composition (low complexity). Composition is skewed to basic and acidic residues over residues 450 to 462 (RPAK…ELCH) and 472 to 486 (ADRE…DTTP). Polar residues predominate over residues 491–502 (NSNSQSTPGSSG). Residues 635-652 (PPLGLSQSGPPGLLPSPS) show a composition bias toward low complexity. Positions 683 to 696 (QAETATKPQATSAP) are enriched in polar residues. Low complexity-rich tracts occupy residues 712–726 (SPSS…SAPP) and 749–770 (SVTA…TAPT). The span at 1239-1249 (LQARRQHTRKK) shows a compositional bias: basic residues.

Belongs to the POM121 family.

It localises to the nucleus. The protein localises to the nuclear pore complex. It is found in the nucleus membrane. The protein resides in the endoplasmic reticulum membrane. Its function is as follows. Essential component of the nuclear pore complex (NPC). The repeat-containing domain may be involved in anchoring components of the pore complex to the pore membrane. When overexpressed in cells induces the formation of cytoplasmic annulate lamellae (AL). The sequence is that of Nuclear envelope pore membrane protein POM 121 (POM121) from Homo sapiens (Human).